We begin with the raw amino-acid sequence, 170 residues long: Ribosome maturation factor RimM (170 aa).

Residues 98–170 (PDEYYWVDLE…LIVVDWDPDF (73 aa)) enclose the PRC barrel domain.

The protein belongs to the RimM family. In terms of assembly, binds ribosomal protein uS19.

Its subcellular location is the cytoplasm. In terms of biological role, an accessory protein needed during the final step in the assembly of 30S ribosomal subunit, possibly for assembly of the head region. Essential for efficient processing of 16S rRNA. May be needed both before and after RbfA during the maturation of 16S rRNA. It has affinity for free ribosomal 30S subunits but not for 70S ribosomes. In Xanthomonas axonopodis pv. citri (strain 306), this protein is Ribosome maturation factor RimM.